A 164-amino-acid chain; its full sequence is MRIEKCYFCSGPVYPGHGVMFVRNDCKQFRFCRSKCHKNFKLKRNPRKTRWTKAFRKLNGKEMTVDKTLEFEKKRNRPVKYDRELINNTIIAMARVQKIKERREKTFYKNRMEGVKGMQKKQKLKEINQNLSLIRGPSALNKLQERIKNNAEKIEQLTTTKMQS.

This sequence belongs to the eukaryotic ribosomal protein eL24 family. Associated with nucleolar and cytoplasmic pre-60S particles. At the end of biogenesis it dissociates from cytoplasmic pre-60S particles and is likely to be exchanged for its ribosomal homolog, RPL24.

It is found in the cytoplasm. The protein resides in the nucleus. Functionally, involved in the biogenesis of the 60S ribosomal subunit. Ensures the docking of nog1 to pre-60S particles. Activates and recruits ATPase AFG2 to cytoplasmic pre-60S ribosomal particles. This Dictyostelium discoideum (Social amoeba) protein is Probable ribosome biogenesis protein RLP24 (rlp24).